Reading from the N-terminus, the 213-residue chain is Ras-like protein rasX (213 aa).

GTP is bound at residue 16–23 (GDGGVGKT). The Effector region signature appears at 38–46 (YDPTIEDSY). GTP-binding positions include 63-67 (DTAGQ) and 122-125 (NKSD). Cysteine methyl ester is present on Cys-210. Cys-210 is lipidated: S-geranylgeranyl cysteine. The propeptide at 211–213 (KMM) is removed in mature form.

It belongs to the small GTPase superfamily. Ras family.

The protein localises to the cell membrane. The catalysed reaction is GTP + H2O = GDP + phosphate + H(+). Functionally, ras proteins bind GDP/GTP and possess intrinsic GTPase activity. The polypeptide is Ras-like protein rasX (rasX) (Dictyostelium discoideum (Social amoeba)).